The following is a 376-amino-acid chain: c-di-GMP synthase (376 aa).

The protein belongs to the CD-NTase family. G05 subfamily.

The catalysed reaction is 2 GTP = 3',3'-c-di-GMP + 2 diphosphate. In terms of biological role, cyclic nucleotide synthase (second messenger synthase) of a CBASS antivirus system. CBASS (cyclic oligonucleotide-based antiphage signaling system) provides immunity against bacteriophage. The CD-NTase protein synthesizes cyclic nucleotides in response to infection; these serve as specific second messenger signals. The signals activate a diverse range of effectors, leading to bacterial cell death and thus abortive phage infection. A type I-D CBASS(GG) system. Cyclic dinucleotide synthase that catalyzes the synthesis of c-di-GMP, has no activity with other NTP substrates. The sequence is that of c-di-GMP synthase from Roseivirga ehrenbergii (strain DSM 102268 / JCM 13514 / KCTC 12282 / NCIMB 14502 / KMM 6017).